Consider the following 217-residue polypeptide: ATP phosphoribosyltransferase (217 aa).

Belongs to the ATP phosphoribosyltransferase family. Short subfamily. As to quaternary structure, heteromultimer composed of HisG and HisZ subunits.

The protein localises to the cytoplasm. It catalyses the reaction 1-(5-phospho-beta-D-ribosyl)-ATP + diphosphate = 5-phospho-alpha-D-ribose 1-diphosphate + ATP. Its pathway is amino-acid biosynthesis; L-histidine biosynthesis; L-histidine from 5-phospho-alpha-D-ribose 1-diphosphate: step 1/9. Functionally, catalyzes the condensation of ATP and 5-phosphoribose 1-diphosphate to form N'-(5'-phosphoribosyl)-ATP (PR-ATP). Has a crucial role in the pathway because the rate of histidine biosynthesis seems to be controlled primarily by regulation of HisG enzymatic activity. This is ATP phosphoribosyltransferase from Burkholderia orbicola (strain AU 1054).